Consider the following 201-residue polypeptide: MTLTIGLTGGIASGKSTVSAMMRELGLPVIDADEAARAVVRPGEDAYRQIVAAFGPGILQTNGEIDRAKLGAIVFNNEEERKKLNAIVHPAVRQKMLAEKEALVRSGTKTVVLDIPLLFESGLTSWVDKVLVVYVDDDIQLRRLMERNGFTEEEARARICAQWPLAEKMKRADAVINNNGTREETRRQLLAILKQWDALEK.

One can recognise a DPCK domain in the interval 4–201 (TIGLTGGIAS…ILKQWDALEK (198 aa)). 12–17 (ASGKST) is an ATP binding site.

The protein belongs to the CoaE family.

It localises to the cytoplasm. It carries out the reaction 3'-dephospho-CoA + ATP = ADP + CoA + H(+). It participates in cofactor biosynthesis; coenzyme A biosynthesis; CoA from (R)-pantothenate: step 5/5. Functionally, catalyzes the phosphorylation of the 3'-hydroxyl group of dephosphocoenzyme A to form coenzyme A. This Geobacillus kaustophilus (strain HTA426) protein is Dephospho-CoA kinase.